A 200-amino-acid polypeptide reads, in one-letter code: Holliday junction branch migration complex subunit RuvA (200 aa).

Residues 1-64 (MIGRIVGTLI…EDSHTLYGFI (64 aa)) form a domain I region. The domain II stretch occupies residues 65–143 (DKNERALFRV…QAAKTDLFSA (79 aa)). Residues 144–149 (PAVLRQ) form a flexible linker region. Residues 150 to 200 (VQADPRQEAEAALISLGYKPQEAAKAIAGVPVDAANSEDVIKAALKGMLRK) are domain III.

This sequence belongs to the RuvA family. In terms of assembly, homotetramer. Forms an RuvA(8)-RuvB(12)-Holliday junction (HJ) complex. HJ DNA is sandwiched between 2 RuvA tetramers; dsDNA enters through RuvA and exits via RuvB. An RuvB hexamer assembles on each DNA strand where it exits the tetramer. Each RuvB hexamer is contacted by two RuvA subunits (via domain III) on 2 adjacent RuvB subunits; this complex drives branch migration. In the full resolvosome a probable DNA-RuvA(4)-RuvB(12)-RuvC(2) complex forms which resolves the HJ.

The protein localises to the cytoplasm. Functionally, the RuvA-RuvB-RuvC complex processes Holliday junction (HJ) DNA during genetic recombination and DNA repair, while the RuvA-RuvB complex plays an important role in the rescue of blocked DNA replication forks via replication fork reversal (RFR). RuvA specifically binds to HJ cruciform DNA, conferring on it an open structure. The RuvB hexamer acts as an ATP-dependent pump, pulling dsDNA into and through the RuvAB complex. HJ branch migration allows RuvC to scan DNA until it finds its consensus sequence, where it cleaves and resolves the cruciform DNA. This is Holliday junction branch migration complex subunit RuvA from Marinomonas sp. (strain MWYL1).